Reading from the N-terminus, the 61-residue chain is Arabinogalactan protein 15 (61 aa).

Positions 1–22 (MAISKASIVVLMMVIISVVASA) are cleaved as a signal peptide. Pyrrolidone carboxylic acid is present on Gln-23. 4-hydroxyproline occurs at positions 27, 29, and 31. Pro-27, Pro-29, and Pro-31 each carry an O-linked (Ara...) hydroxyproline glycan. The GPI-anchor amidated serine moiety is linked to residue Ser-35. The propeptide at 36–61 (SAISASFVSAGVAAVAALVFGSALRI) is removed in mature form.

This sequence belongs to the AG-peptide AGP family. In terms of processing, contains 4-hydroxyproline; hydroxylated on Pro-27, Pro-29 and Pro-31. Post-translationally, O-glycosylated on hydroxyprolines; noncontiguous hydroxylproline residues are glycosylated with arabinogalactan. In terms of tissue distribution, expressed in reproductive tissues. Expressed in chalaza, funiculus, stigma, septum, style, integument and transmitting tract.

The protein localises to the cell membrane. Functionally, proteoglycan that seems to be implicated in diverse developmental roles such as differentiation, cell-cell recognition, embryogenesis and programmed cell death. This chain is Arabinogalactan protein 15, found in Arabidopsis thaliana (Mouse-ear cress).